The primary structure comprises 270 residues: uncharacterized protein (270 aa).

An HTH lysR-type domain is found at 1–50; sequence LTEVVKAQSFTKAAENLYTSQPSISRDIKRLENDYDVKVFEFKHSKMTLT. The segment at residues 10–29 is a DNA-binding region (H-T-H motif); it reads FTKAAENLYTSQPSISRDIK.

Belongs to the LysR transcriptional regulatory family.

This is an uncharacterized protein from Staphylococcus xylosus.